Here is a 152-residue protein sequence, read N- to C-terminus: Large ribosomal subunit protein uL15 (152 aa).

Residues 18 to 37 (RVARGIGSGKGKTAGRGVKG) are disordered. Residues 23-35 (IGSGKGKTAGRGV) show a composition bias toward gly residues.

This sequence belongs to the universal ribosomal protein uL15 family. Part of the 50S ribosomal subunit.

Functionally, binds to the 23S rRNA. The sequence is that of Large ribosomal subunit protein uL15 from Rickettsia bellii (strain OSU 85-389).